We begin with the raw amino-acid sequence, 504 residues long: Cobyric acid synthase (504 aa).

Residues 254–442 form the GATase cobBQ-type domain; the sequence is AIDVAVIRYP…MHDLFHNDMF (189 aa). Catalysis depends on C336, which acts as the Nucleophile. H434 is an active-site residue.

It belongs to the CobB/CobQ family. CobQ subfamily.

It functions in the pathway cofactor biosynthesis; adenosylcobalamin biosynthesis. Catalyzes amidations at positions B, D, E, and G on adenosylcobyrinic A,C-diamide. NH(2) groups are provided by glutamine, and one molecule of ATP is hydrogenolyzed for each amidation. The sequence is that of Cobyric acid synthase from Anoxybacillus flavithermus (strain DSM 21510 / WK1).